We begin with the raw amino-acid sequence, 97 residues long: Small nuclear ribonucleoprotein Sm D3 (97 aa).

Positions L3–L75 constitute a Sm domain.

The protein belongs to the snRNP core protein family. As to quaternary structure, belongs to the 40S cdc5-associated complex (or cwf complex), a spliceosome sub-complex reminiscent of a late-stage spliceosome composed of the U2, U5 and U6 snRNAs and at least brr2, cdc5, cwf2/prp3, cwf3/syf1, cwf4/syf3, cwf5/ecm2, spp42/cwf6, cwf7/spf27, cwf8, cwf9, cwf10, cwf11, cwf12, prp45/cwf13, cwf14, cwf15, cwf16, cwf17, cwf18, cwf19, cwf20, cwf21, cwf22, cwf23, cwf24, cwf25, cwf26, cyp7/cwf27, cwf28, cwf29/ist3, lea1, msl1, prp5/cwf1, prp10, prp12/sap130, prp17, prp22, sap61, sap62, sap114, sap145, slu7, smb1, smd1, smd3, smf1, smg1 and syf2. Interacts with saf5; the interaction is direct.

The protein resides in the nucleus. It localises to the cytoplasm. Its subcellular location is the cytosol. In terms of biological role, plays a role in pre-mRNA splicing as a core component of the spliceosomal U1, U2, U4 and U5 small nuclear ribonucleoproteins (snRNPs), the building blocks of the spliceosome. In Schizosaccharomyces pombe (strain 972 / ATCC 24843) (Fission yeast), this protein is Small nuclear ribonucleoprotein Sm D3 (smd3).